The chain runs to 691 residues: DNA ligase (691 aa).

NAD(+)-binding positions include 41–45 (DAEYD), 90–91 (SL), and glutamate 130. Residue lysine 132 is the N6-AMP-lysine intermediate of the active site. Residues arginine 153, glutamate 190, lysine 307, and lysine 331 each contribute to the NAD(+) site. Zn(2+) contacts are provided by cysteine 425, cysteine 428, cysteine 443, and cysteine 449. The BRCT domain occupies 610-691 (APQGVLAGKT…MHTLLEGHAR (82 aa)).

The protein belongs to the NAD-dependent DNA ligase family. LigA subfamily. Mg(2+) serves as cofactor. The cofactor is Mn(2+).

The catalysed reaction is NAD(+) + (deoxyribonucleotide)n-3'-hydroxyl + 5'-phospho-(deoxyribonucleotide)m = (deoxyribonucleotide)n+m + AMP + beta-nicotinamide D-nucleotide.. Functionally, DNA ligase that catalyzes the formation of phosphodiester linkages between 5'-phosphoryl and 3'-hydroxyl groups in double-stranded DNA using NAD as a coenzyme and as the energy source for the reaction. It is essential for DNA replication and repair of damaged DNA. The sequence is that of DNA ligase from Burkholderia pseudomallei (strain K96243).